A 311-amino-acid polypeptide reads, in one-letter code: Aspartate carbamoyltransferase catalytic subunit (311 aa).

R59 and T60 together coordinate carbamoyl phosphate. K87 is an L-aspartate binding site. Residues R109, H139, and Q142 each contribute to the carbamoyl phosphate site. L-aspartate contacts are provided by R172 and R224. Residues A265 and P266 each contribute to the carbamoyl phosphate site.

This sequence belongs to the aspartate/ornithine carbamoyltransferase superfamily. ATCase family. In terms of assembly, heterododecamer (2C3:3R2) of six catalytic PyrB chains organized as two trimers (C3), and six regulatory PyrI chains organized as three dimers (R2).

It carries out the reaction carbamoyl phosphate + L-aspartate = N-carbamoyl-L-aspartate + phosphate + H(+). It functions in the pathway pyrimidine metabolism; UMP biosynthesis via de novo pathway; (S)-dihydroorotate from bicarbonate: step 2/3. In terms of biological role, catalyzes the condensation of carbamoyl phosphate and aspartate to form carbamoyl aspartate and inorganic phosphate, the committed step in the de novo pyrimidine nucleotide biosynthesis pathway. The protein is Aspartate carbamoyltransferase catalytic subunit of Streptococcus pyogenes serotype M1.